An 892-amino-acid polypeptide reads, in one-letter code: MDHYDSQQTNDYMQPEEDWDRDLLLDPAWEKQQRKTFTAWCNSHLRKAGTQIENIEEDFRDGLKLMLLLEVISGERLAKPERGKMRVHKISNVNKALDFIASKGVKLVSIGAEEIVDGNVKMTLGMIWTIILRFAIQDISVEETSAKEGLLLWCQRKTAPYKNVNIQNFHISWKDGLGFCALIHRHRPELIDYGKLRKDDPLTNLNTAFDVAEKYLDIPKMLDAEDIVGTARPDEKAIMTYVSSFYHAFSGAQKAETAANRICKVLAVNQENEQLMEDYEKLASDLLEWIRRTIPWLENRVPENTMHAMQQKLEDFRDYRRLHKPPKVQEKCQLEINFNTLQTKLRLSNRPAFMPSEGRMVSDINNAWGCLEQVEKGYEEWLLNEIRRLERLDHLAEKFRQKASIHEAWTDGKEAMLRQKDYETATLSEIKALLKKHEAFESDLAAHQDRVEQIAAIAQELNELDYYDSPSVNARCQKICDQWDNLGALTQKRREALERTEKLLETIDQLYLEYAKRAAPFNNWMEGAMEDLQDTFIVHTIEEIQGLTTAHEQFKATLPDADKERLAILGIHNEVSKIVQTYHVNMAGTNPYTTITPQEINGKWDHVRQLVPRRDQALTEEHARQQHNERLRKQFGAQANVIGPWIQTKMEEIGRISIEMHGTLEDQLSHLRQYEKSIVNYKPKIDQLEGDHQLIQEALIFDNKHTNYTMEHIRVGWEQLLTTIARTINEVENQILTRDAKGISQEQMNEFRASFNHFDRDHSGTLGPEEFKACLISLGYDIGNDPQGEAEFARIMSIVDPNRLGVVTFQAFIDFMSRETADTDTADQVMASFKILAGDKNYITVDELRRELPPDQAEYCIARMAPYTGPDSVPGALDYMSFSTALYGESDL.

Methionine 1 is subject to N-acetylmethionine. Positions 1–247 are actin-binding; that stretch reads MDHYDSQQTN…IMTYVSSFYH (247 aa). Serine 6 is subject to Phosphoserine. At tyrosine 12 the chain carries Phosphotyrosine; by FAK1. Calponin-homology (CH) domains follow at residues 31–135 and 144–250; these read KQQR…LRFA and TSAK…HAFS. Residues lysine 95 and lysine 195 each carry the N6-acetyllysine modification. Spectrin repeat units follow at residues 274 to 384, 394 to 499, 509 to 620, and 630 to 733; these read QLME…WLLN, HLAE…ALER, QLYL…ALTE, and RLRK…EVEN. Positions 274 to 733 are interaction with DDN; the sequence is QLMEDYEKLA…IARTINEVEN (460 aa). At serine 471 the chain carries Phosphoserine. An N6-acetyllysine modification is found at lysine 676. Phosphoserine is present on serine 677. EF-hand domains follow at residues 746-781 and 787-822; these read EQMNEFRASFNHFDRDHSGTLGPEEFKACLISLGYD and QGEAEFARIMSIVDPNRLGVVTFQAFIDFMSRETAD. Ca(2+) contacts are provided by aspartate 759, aspartate 761, serine 763, threonine 765, and glutamate 770. Position 890 is a phosphoserine (serine 890).

This sequence belongs to the alpha-actinin family. As to quaternary structure, homodimer; antiparallel. Interacts with MYOZ2, TTID and LPP. Interacts with DDN. Interacts with PSD. Interacts with MICALL2. Interacts with DNM2 and CTTN. Interacts with PDLIM1. Interacts with PDLIM2. Interacts with PDLIM4 (via PDZ domain). Interacts with IGSF8.

It is found in the cytoplasm. The protein localises to the cytoskeleton. It localises to the myofibril. Its subcellular location is the sarcomere. The protein resides in the z line. It is found in the cell membrane. The protein localises to the cell junction. It localises to the cell projection. Its subcellular location is the ruffle. F-actin cross-linking protein which is thought to anchor actin to a variety of intracellular structures. Association with IGSF8 regulates the immune synapse formation and is required for efficient T-cell activation. The protein is Alpha-actinin-1 (ACTN1) of Macaca fascicularis (Crab-eating macaque).